Consider the following 269-residue polypeptide: Tryptophan synthase alpha chain (269 aa).

Residues Glu-49 and Asp-60 each act as proton acceptor in the active site.

The protein belongs to the TrpA family. Tetramer of two alpha and two beta chains.

It carries out the reaction (1S,2R)-1-C-(indol-3-yl)glycerol 3-phosphate + L-serine = D-glyceraldehyde 3-phosphate + L-tryptophan + H2O. The protein operates within amino-acid biosynthesis; L-tryptophan biosynthesis; L-tryptophan from chorismate: step 5/5. In terms of biological role, the alpha subunit is responsible for the aldol cleavage of indoleglycerol phosphate to indole and glyceraldehyde 3-phosphate. This chain is Tryptophan synthase alpha chain, found in Buchnera aphidicola subsp. Acyrthosiphon pisum (strain APS) (Acyrthosiphon pisum symbiotic bacterium).